The sequence spans 401 residues: MHCDVLWHNAQLMTLDAADGGLGIVDDGTVACQQGRIVYAGPAAQAPALQPHATHDCQRRWISPGLIDCHTHLVYAGNRANEFEQRLRGASYADIAAAGGGIVATVRATRAADDAALLAASLPRLDAMLGEGVTTLEIKSGYGLTLDDEIKQLRVARQLAALRKVEVVPTFLGAHAVPPGGDAQRYTDQVCTQMIPAIAAQGLAEAVDVFCEHLAFSHAQAEQVFIAAQAHGLHIKIHAEQLSNQHGAELAARYGALSADHIEYLDQAGIAAMAGAGTVAVLLPGAFYFTRDTQVPPIAALRAAGVPLALATDCNPGTSPLTSPLLAMNMAATLFRMTVDECIAGFTREAARALGRSERLGRLRAGMDCDLAIWDIDAPADLVYRMGFNPLHARVLRGHLC.

Fe(3+)-binding residues include H70 and H72. Residues H70 and H72 each contribute to the Zn(2+) site. R79, Y142, and H175 together coordinate 4-imidazolone-5-propanoate. Y142 is an N-formimidoyl-L-glutamate binding site. H238 contacts Fe(3+). H238 serves as a coordination point for Zn(2+). Q241 serves as a coordination point for 4-imidazolone-5-propanoate. D313 is a Fe(3+) binding site. D313 serves as a coordination point for Zn(2+). N-formimidoyl-L-glutamate-binding residues include N315 and G317. T318 contributes to the 4-imidazolone-5-propanoate binding site.

It belongs to the metallo-dependent hydrolases superfamily. HutI family. The cofactor is Zn(2+). Fe(3+) is required as a cofactor.

It localises to the cytoplasm. It carries out the reaction 4-imidazolone-5-propanoate + H2O = N-formimidoyl-L-glutamate. Its pathway is amino-acid degradation; L-histidine degradation into L-glutamate; N-formimidoyl-L-glutamate from L-histidine: step 3/3. Functionally, catalyzes the hydrolytic cleavage of the carbon-nitrogen bond in imidazolone-5-propanoate to yield N-formimidoyl-L-glutamate. It is the third step in the universal histidine degradation pathway. This chain is Imidazolonepropionase, found in Xanthomonas oryzae pv. oryzae (strain MAFF 311018).